A 204-amino-acid polypeptide reads, in one-letter code: Ribosomal RNA small subunit methyltransferase G (204 aa).

G73, F78, and R139 together coordinate S-adenosyl-L-methionine.

Belongs to the methyltransferase superfamily. RNA methyltransferase RsmG family.

The protein localises to the cytoplasm. It carries out the reaction guanosine(527) in 16S rRNA + S-adenosyl-L-methionine = N(7)-methylguanosine(527) in 16S rRNA + S-adenosyl-L-homocysteine. Its function is as follows. Specifically methylates the N7 position of guanine in position 527 of 16S rRNA. The polypeptide is Ribosomal RNA small subunit methyltransferase G (Coxiella burnetii (strain RSA 331 / Henzerling II)).